The sequence spans 88 residues: Small ribosomal subunit protein bS16c (88 aa).

This sequence belongs to the bacterial ribosomal protein bS16 family.

It localises to the plastid. Its subcellular location is the chloroplast. The sequence is that of Small ribosomal subunit protein bS16c from Helianthus annuus (Common sunflower).